A 912-amino-acid chain; its full sequence is WD repeat-containing protein 44 (912 aa).

Residues 1–14 are compositionally biased toward acidic residues; it reads MASESDTEEFFDAP. The disordered stretch occupies residues 1 to 25; that stretch reads MASESDTEEFFDAPEDVHLEGGDPI. A2 is subject to N-acetylalanine. Residues 2 to 170 form a binding activity region; it reads ASESDTEEFF…SSTAQLNVPE (169 aa). S3 is subject to Phosphoserine. Residues 9–15 carry the FFAT-like motif motif; sequence EFFDAPE. S50, S66, S71, S81, S96, and S126 each carry phosphoserine. Disordered stretches follow at residues 79-104 and 118-152; these read DDSL…GTEL and QEDS…KPVD. Polar residues predominate over residues 89-104; sequence QSDQATASPVTAGTEL. T158 is subject to Phosphothreonine. Disordered stretches follow at residues 183-202, 207-279, 318-349, 396-422, and 457-479; these read VKES…TKDF, EVAP…PKEN, QENG…ELTD, SNDA…RLKQ, and RDEV…MPYT. The interval 210–256 is important for interaction with ARHGAP26 AND ARHGAP10; sequence PAKPPRQLTPEPDIVASTKKPVPARPPPPANFPPPRPPPPSRPAPPP. Phosphothreonine is present on T218. Positions 232-255 are enriched in pro residues; it reads PARPPPPANFPPPRPPPPSRPAPP. S261 carries the post-translational modification Phosphoserine. Over residues 261–277 the composition is skewed to basic and acidic residues; sequence SELEFEALKTPDLDVPK. Residue T270 is modified to Phosphothreonine. Residues 333–346 form an important for interaction with RAB11A region; it reads VMGPQRPRSNSGRE. The tract at residues 334–504 is interaction with RAB11; sequence MGPQRPRSNS…DFDQIKVVQD (171 aa). Phosphoserine occurs at positions 341 and 343. The residue at position 348 (T348) is a Phosphothreonine. 4 positions are modified to phosphoserine: S402, S469, S470, and S471. Acidic residues predominate over residues 466 to 475; sequence DDPSSSDDEG. Y478 bears the Phosphotyrosine mark. One copy of the WD 1 repeat lies at 508 to 547; sequence EHMGAVWTMKFSHCGRLLASAGQDNVVRIWALKNAFDYFN. The segment at 556 to 592 is disordered; the sequence is EGRVSPSPSQESLNSSKSDTDTGVCSGTDEDPDDKNA. Residues S560 and S564 each carry the phosphoserine modification. Over residues 560 to 572 the composition is skewed to low complexity; it reads SPSPSQESLNSSK. WD repeat units lie at residues 604-642, 644-684, 689-728, 739-778, 783-822, and 871-912; these read GHTA…CLCC, QHID…VALW, GQTK…YHTQ, KVGR…LSMK, VNSS…SKFT, and EDAE…KNLS.

In terms of assembly, interacts with the GTP-bound form of RAB11A when membrane-associated. Interacts with GRAF1/ARHGAP26 or GRAF2/ARHGAP10; the interaction connects the endoplasmic reticulum (ER) with the endosomal tubule. Interacts (via FFAT-like motif) with VAPA (via MSP domain) or VAPB (via MSP domain); the interaction connects the ER with the endosomal tubule. Does not bind to other Rab and Rho small G proteins. In terms of processing, phosphorylated by ATK1; the phosphorylation stabilizes its interaction with RAB11A and RAB11B. As to expression, highly expressed in brain.

It is found in the cytoplasm. The protein localises to the cytosol. The protein resides in the perinuclear region. It localises to the endosome membrane. Its subcellular location is the golgi apparatus. It is found in the trans-Golgi network. In terms of biological role, downstream effector for Rab11 which regulates Rab11 intracellular membrane trafficking functions such as endocytic recycling, intracellular ciliogenesis and protein export. ATK1-mediated phosphorylation of WDR44 induces binding to Rab11 which activates endocytic recycling of transferrin receptor back to the plasma membrane. When bound to Rab11, prevents the formation of the ciliogenic Rab11-Rabin8/RAB3IP-RAB11FIP3 complex, therefore inhibiting preciliary trafficking and ciliogenesis. Participates in neo-synthesized protein export by connecting the endoplasmic reticulum (ER) with the endosomal tubule via direct interactions with the integral ER proteins VAPA or VAPB and the endosomal protein GRAFs (GRAF1/ARHGAP26 or GRAF2/ARHGAP10), which facilitates the transfer of proteins such as E-cadherin, MPP14 and CFTR into a Rab8-Rab10-Rab11-dependent export route. The sequence is that of WD repeat-containing protein 44 (WDR44) from Bos taurus (Bovine).